Consider the following 239-residue polypeptide: Phosphoribosylaminoimidazole-succinocarboxamide synthase (239 aa).

Belongs to the SAICAR synthetase family.

The enzyme catalyses 5-amino-1-(5-phospho-D-ribosyl)imidazole-4-carboxylate + L-aspartate + ATP = (2S)-2-[5-amino-1-(5-phospho-beta-D-ribosyl)imidazole-4-carboxamido]succinate + ADP + phosphate + 2 H(+). Its pathway is purine metabolism; IMP biosynthesis via de novo pathway; 5-amino-1-(5-phospho-D-ribosyl)imidazole-4-carboxamide from 5-amino-1-(5-phospho-D-ribosyl)imidazole-4-carboxylate: step 1/2. This is Phosphoribosylaminoimidazole-succinocarboxamide synthase from Dichelobacter nodosus (strain VCS1703A).